Here is a 98-residue protein sequence, read N- to C-terminus: Large ribosomal subunit protein bL28 (98 aa).

It belongs to the bacterial ribosomal protein bL28 family.

The chain is Large ribosomal subunit protein bL28 from Bartonella bacilliformis (strain ATCC 35685 / KC583 / Herrer 020/F12,63).